Consider the following 297-residue polypeptide: MADTSMYQGSLTALVTPMHTDGRIDFDVSAKLIERQIEAGTTALIPAGTTGESPTLSHEEHGRVVAHCVETANGRVRVMAGAGSNSTSEAVLMAKHAHSVGADSVLVVVPYYNKPTQEGLYRHFMTIADATPLPMFLYCIPGRSVVDISVATMARLAEHPNIVGTKDATANMARPIAVRRAVDKPFNQLSGDDNSVLSFLAAGGDGCIGVTSNVVPHLCADMHLAWQEGRIEDAIAIQDHLTPLHDAMFMESNPGPVKYALSRLGLCNATLRLPLVEPQEETRRAIDAALRSLELLD.

Thr50 contributes to the pyruvate binding site. Catalysis depends on Tyr138, which acts as the Proton donor/acceptor. Lys166 acts as the Schiff-base intermediate with substrate in catalysis. Residue Ile208 participates in pyruvate binding.

Belongs to the DapA family. Homotetramer; dimer of dimers.

It is found in the cytoplasm. It catalyses the reaction L-aspartate 4-semialdehyde + pyruvate = (2S,4S)-4-hydroxy-2,3,4,5-tetrahydrodipicolinate + H2O + H(+). The protein operates within amino-acid biosynthesis; L-lysine biosynthesis via DAP pathway; (S)-tetrahydrodipicolinate from L-aspartate: step 3/4. In terms of biological role, catalyzes the condensation of (S)-aspartate-beta-semialdehyde [(S)-ASA] and pyruvate to 4-hydroxy-tetrahydrodipicolinate (HTPA). This chain is 4-hydroxy-tetrahydrodipicolinate synthase, found in Gluconobacter oxydans (strain 621H) (Gluconobacter suboxydans).